The primary structure comprises 83 residues: Apolipoprotein C-I, basic form (83 aa).

The signal sequence occupies residues Met-1–Gly-26.

The protein belongs to the apolipoprotein C1 family.

The protein localises to the secreted. Its function is as follows. Inhibitor of lipoprotein binding to the low density lipoprotein (LDL) receptor, LDL receptor-related protein, and very low density lipoprotein (VLDL) receptor. Associates with high density lipoproteins (HDL) and the triacylglycerol-rich lipoproteins in the plasma and makes up about 10% of the protein of the VLDL and 2% of that of HDL. Appears to interfere directly with fatty acid uptake and is also the major plasma inhibitor of cholesteryl ester transfer protein (CETP). Binds free fatty acids and reduces their intracellular esterification. Modulates the interaction of APOE with beta-migrating VLDL and inhibits binding of beta-VLDL to the LDL receptor-related protein. The polypeptide is Apolipoprotein C-I, basic form (APOC1B) (Pan troglodytes (Chimpanzee)).